We begin with the raw amino-acid sequence, 146 residues long: 3-hydroxyacyl-[acyl-carrier-protein] dehydratase FabZ (146 aa).

His49 is a catalytic residue.

The protein belongs to the thioester dehydratase family. FabZ subfamily.

It is found in the cytoplasm. The enzyme catalyses a (3R)-hydroxyacyl-[ACP] = a (2E)-enoyl-[ACP] + H2O. Involved in unsaturated fatty acids biosynthesis. Catalyzes the dehydration of short chain beta-hydroxyacyl-ACPs and long chain saturated and unsaturated beta-hydroxyacyl-ACPs. The chain is 3-hydroxyacyl-[acyl-carrier-protein] dehydratase FabZ from Pseudomonas entomophila (strain L48).